The primary structure comprises 250 residues: Probable transcriptional regulatory protein tll0175 (250 aa).

It belongs to the TACO1 family.

The protein localises to the cytoplasm. In Thermosynechococcus vestitus (strain NIES-2133 / IAM M-273 / BP-1), this protein is Probable transcriptional regulatory protein tll0175.